A 1526-amino-acid chain; its full sequence is Myosin type-2 heavy chain 1 (1526 aa).

The region spanning 22-73 is the Myosin N-terminal SH3-like domain; sequence DDKRWVWISDPETAFTKAWIKEDLPDKKYVVRYNNSRDEKIVGEDEIDPVNP. A Myosin motor domain is found at 77–755; the sequence is DRVNDMAELT…VLAELEERRV (679 aa). 170–177 is an ATP binding site; it reads GESGAGKT. 2 actin-binding regions span residues 634 to 656 and 734 to 748; these read LNQL…VPNE and RIGV…GVLA. The IQ domain occupies 758–787; the sequence is LQRLMTMLQTRIRGFLQRKIFQKRLKDIQA. Residues 875-1244 adopt a coiled-coil conformation; it reads ALDKEEILRR…SLTKQVNELS (370 aa). Ser1044 is modified (phosphoserine).

It belongs to the TRAFAC class myosin-kinesin ATPase superfamily. Myosin family. As to quaternary structure, binds to cdc4 and rlc1.

In terms of biological role, required for cell division. It is a component of the cdc12 'spot', a structure thought to mark the site of septation. May work in conjunction with myo3. The protein is Myosin type-2 heavy chain 1 (myo2) of Schizosaccharomyces pombe (strain 972 / ATCC 24843) (Fission yeast).